A 199-amino-acid chain; its full sequence is Chaperone protein TorD (199 aa).

Belongs to the TorD/DmsD family. TorD subfamily.

The protein resides in the cytoplasm. Its function is as follows. Involved in the biogenesis of TorA. Acts on TorA before the insertion of the molybdenum cofactor and, as a result, probably favors a conformation of the apoenzyme that is competent for acquiring the cofactor. In Escherichia coli O81 (strain ED1a), this protein is Chaperone protein TorD.